A 328-amino-acid polypeptide reads, in one-letter code: GMP reductase (328 aa).

The Thioimidate intermediate role is filled by Cys176. 205–228 serves as a coordination point for NADP(+); that stretch reads IIADGGIRTHGDIAKSIRFGASMI.

The protein belongs to the IMPDH/GMPR family. GuaC type 2 subfamily.

The enzyme catalyses IMP + NH4(+) + NADP(+) = GMP + NADPH + 2 H(+). In terms of biological role, catalyzes the irreversible NADPH-dependent deamination of GMP to IMP. It functions in the conversion of nucleobase, nucleoside and nucleotide derivatives of G to A nucleotides, and in maintaining the intracellular balance of A and G nucleotides. This Streptococcus pneumoniae (strain Taiwan19F-14) protein is GMP reductase.